Reading from the N-terminus, the 22-residue chain is Mu-conotoxin KIIIB (22 aa).

A propeptide spanning residues Lys1–Arg2 is cleaved from the precursor. 7 cysteine pairs are disulfide-bonded: Cys5-Cys13, Cys5-Cys19, Cys5-Cys20, Cys6-Cys13, Cys6-Cys19, Cys8-Cys19, and Cys8-Cys20. Pharmacophore key residues stretches follow at residues Arg14 to His16 and Arg18 to Cys19. Position 20 is a cysteine amide (Cys20).

It belongs to the conotoxin M superfamily. In terms of assembly, monomer. Toxins with three different disulfide connectivities have been synthesized. The conotoxin mu-KIIIA-P1 shows the connectivity C1-C5, C2-C4, and C3-C6, whereas mu-KIIIA-P2 shows the connectivity C1-C6, C2-C4, and C3-C5. The conotoxin mu-KIIIA-N has the 'native' fold of the mu-conotoxin family (C1-C4, C2-C5, and C3-C6). Mu-KIIIA-P1 and mu-KIIIA-P2 are obtained by both thermodynamic oxidative folding and regioselective synthesis. Mu-KIIIA-P1 is the major oxidative folding product. Mu-KIIIA-N is only obtained by regioselective synthesis. Expressed by the venom duct.

Its subcellular location is the secreted. Mu-conotoxin KIIIA-P1: mu-conotoxins block voltage-gated sodium channels (Nav). This toxin potently blocks Nav1.2/SCN2A (IC(50)5-124 nM), Nav1.4/SCN4A (IC(50)=20-90 nM), and Nav1.7/SCN9A (IC(50)=290-413 nM). It moderately blocks Nav1.1/SCN1A, and mNav1.6/SCN8A. It also shows a very low activity on Nav1.3/SCN3A. This toxin binds a microsite within the pore different from the tetrodotoxin binding site 1 (tested on Nav1.2). The block is partial, with a residual current that can be completely blocked by TTX. The toxin probably docks at a more superficial site in the outer vestibule of the channel than does TTX. On rNav1.2/SCN2A, it produces a block that is only partially reversible. The block of Nav1.7 is modified when beta-subunits are coexpressed with the alpha subunit. Hence, blocks of channels containing beta-1 and beta-3 subunits are more potent (compared to channels without beta subunits), whereas blocks of channels containing beta-2 and beta-4 subunits are less potent (compared to channels without beta subunits). Functionally, mu-conotoxin KIIIA-P2: This toxin potently blocks Nav1.2/SCN2A (Kd=230 nM, IC(50)=1.37 uM) and Nav1.4/SCN4A (Kd=830 nM, IC(50)=2 uM). It also moderately blocks Nav1.7/SCN9A (Kd=1.57 uM, IC(50)=5.4 uM). In addition, this toxin may also inhibit other sodium channels, as does Mu-conotoxin KIIIA-P1. In terms of biological role, mu-conotoxin KIIIA-N: This toxin moderately blocks Nav1.2/SCN2A (IC(50)=875 nM), Nav1.4/SCN4A (IC(50)=472 nM), and Nav1.7/SCN9A (IC(50)=887 nM). Its function is as follows. Mu-conotoxin KIIIB-P1: This toxin potently blocks Nav1.2/SCN2A (Kd=470 nM). In addition, this toxin may also inhibit other sodium channels, as does Mu-conotoxin KIIIA-P1. Mu-conotoxin KIIIB-P2: This toxin potently blocks Nav1.2/SCN2A (Kd=26 nM). In addition, this toxin may also inhibit other sodium channels, as does Mu-conotoxin KIIIA-P1. This Conus kinoshitai (Kinoshita's cone) protein is Mu-conotoxin KIIIB.